We begin with the raw amino-acid sequence, 636 residues long: 1-deoxy-D-xylulose-5-phosphate synthase (636 aa).

Residues His-72 and 113-115 (GHA) each bind thiamine diphosphate. Asp-144 serves as a coordination point for Mg(2+). Residues 145–146 (GA), Asn-174, Tyr-287, and Glu-370 contribute to the thiamine diphosphate site. Asn-174 provides a ligand contact to Mg(2+).

Belongs to the transketolase family. DXPS subfamily. As to quaternary structure, homodimer. Requires Mg(2+) as cofactor. Thiamine diphosphate is required as a cofactor.

It catalyses the reaction D-glyceraldehyde 3-phosphate + pyruvate + H(+) = 1-deoxy-D-xylulose 5-phosphate + CO2. The protein operates within metabolic intermediate biosynthesis; 1-deoxy-D-xylulose 5-phosphate biosynthesis; 1-deoxy-D-xylulose 5-phosphate from D-glyceraldehyde 3-phosphate and pyruvate: step 1/1. In terms of biological role, catalyzes the acyloin condensation reaction between C atoms 2 and 3 of pyruvate and glyceraldehyde 3-phosphate to yield 1-deoxy-D-xylulose-5-phosphate (DXP). The polypeptide is 1-deoxy-D-xylulose-5-phosphate synthase (Microcystis aeruginosa (strain NIES-843 / IAM M-2473)).